A 271-amino-acid chain; its full sequence is uncharacterized protein (271 aa).

The signal sequence occupies residues methionine 1–alanine 22. Cysteine 23 is lipidated: N-palmitoyl cysteine. A lipid anchor (S-diacylglycerol cysteine) is attached at cysteine 23.

It belongs to the staphylococcal tandem lipoprotein family.

The protein resides in the cell membrane. This is an uncharacterized protein from Staphylococcus aureus (strain MW2).